Reading from the N-terminus, the 488-residue chain is 7,8-epoxymelianol synthase CYP88A51 (488 aa).

A helical transmembrane segment spans residues 4–24 (NFLWPMLAMFLGSLVVMFGFL). Cys436 contacts heme.

Belongs to the cytochrome P450 family. The cofactor is heme. As to expression, accumulates in mature fruits and in juice vesicles.

The protein resides in the membrane. The catalysed reaction is melianol + reduced [NADPH--hemoprotein reductase] + O2 = 7,8-epoxymelianol + oxidized [NADPH--hemoprotein reductase] + H2O + H(+). The protein operates within secondary metabolite biosynthesis; terpenoid biosynthesis. Its function is as follows. Monooxygenase involved in the biosynthesis of limonoids triterpene natural products such as limonin, a compound with insecticidal activity responsible for the bitter taste in citrus. Catalyzes the epoxidation of melianol to produce 7,8-epoxymelianol. The sequence is that of 7,8-epoxymelianol synthase CYP88A51 from Citrus sinensis (Sweet orange).